The primary structure comprises 448 residues: Homogentisate 1,2-dioxygenase (448 aa).

His303 acts as the Proton acceptor in catalysis. The Fe cation site is built by His346 and Glu352. Residues Tyr361 and His382 each contribute to the homogentisate site. Fe cation is bound at residue His382.

The protein belongs to the homogentisate dioxygenase family. Hexamer; dimer of trimers. Requires Fe cation as cofactor.

It catalyses the reaction homogentisate + O2 = 4-maleylacetoacetate + H(+). It functions in the pathway amino-acid degradation; L-phenylalanine degradation; acetoacetate and fumarate from L-phenylalanine: step 4/6. Functionally, involved in the catabolism of homogentisate (2,5-dihydroxyphenylacetate or 2,5-OH-PhAc), a central intermediate in the degradation of phenylalanine and tyrosine. Catalyzes the oxidative ring cleavage of the aromatic ring of homogentisate to yield maleylacetoacetate. The polypeptide is Homogentisate 1,2-dioxygenase (Rhodopseudomonas palustris (strain ATCC BAA-98 / CGA009)).